We begin with the raw amino-acid sequence, 446 residues long: MSDDQSLSEVEMSPVGSEDPSLTPDPLPPHAHSSPDDDDDDDEEEEEETKVKKEQDSEDERFPVCIREAVSQVLNGYDWTLVPMPVRVNGGSKSKPHVKRPMNAFMVWAQAARRKLADQYPHLHNAELSKTLGKLWRLLNENDKRPFIEEAERLRMQHKKDHPDYKYQPRRRKNGKPSPGEGDGSSEAEGGAASIQAHYKNSHLDHRHGSPMSDGNSEHSTGQSHGPPTPPTTPKTELQAGKSDGKRDGSHALREGGKPQIDFGNVDIGEISHDVMSNMETFDVNEFDQYLPPNGHAGHPSHIGGYTSSYGLTGALAAGPSAWALAKQHSQTVADSKAQVKTESSSTSHYTEQPSTSQLTYTSLGLPHYGSAFPSISRPQFDYADHQPSSSYYSHSAQASSLYSAFSYMGPPQRPLYTAISDPPSVAQSHSPTHWEQPVYTTLSRP.

Disordered stretches follow at residues 1 to 60 (MSDD…SEDE), 153 to 191 (RLRM…AEGG), and 203 to 264 (HLDH…IDFG). A compositionally biased stretch (acidic residues) spans 36–48 (DDDDDDDEEEEEE). Residue Lys-52 forms a Glycyl lysine isopeptide (Lys-Gly) (interchain with G-Cter in SUMO) linkage. Positions 56-96 (DSEDERFPVCIREAVSQVLNGYDWTLVPMPVRVNGGSKSKP) are dimerization (DIM). The HMG box DNA-binding region spans 98-166 (VKRPMNAFMV…QHKKDHPDYK (69 aa)). Basic and acidic residues predominate over residues 153-167 (RLRMQHKKDHPDYKY). Positions 213–226 (SDGNSEHSTGQSHG) are enriched in polar residues. Residues 217–303 (SEHSTGQSHG…NGHAGHPSHI (87 aa)) form a transactivation domain (TAM) region. Basic and acidic residues predominate over residues 243 to 257 (SDGKRDGSHALREGG). The tract at residues 337–446 (KAQVKTESSS…QPVYTTLSRP (110 aa)) is transactivation domain (TAC). Lys-341 is covalently cross-linked (Glycyl lysine isopeptide (Lys-Gly) (interchain with G-Cter in SUMO)). A disordered region spans residues 421-446 (SDPPSVAQSHSPTHWEQPVYTTLSRP). Positions 426 to 446 (VAQSHSPTHWEQPVYTTLSRP) are enriched in polar residues.

Interacts with the sumoylation factors ube2i/ubc9 and sumo1. In terms of processing, sumoylated. In terms of tissue distribution, first expressed at stages 13/14 at the lateral edges of the neural plate, in the neural crest forming region. By stage 22, neural crest cells migrate in the cranial region and strong expression is seen in the crest cells that populate the branchial arches as well as those migrating in the frontonasal region. Also strongly expressed in the trunk neural crest. Expression in the otic vesicle begins around stage 25 and persists until at least stage 40. At stage 30, expression is down-regulated in the cranial neural crest of the pharyngeal arches but persists in the trunk neural crest, in the otic vesicle and in discrete domains adjacent to the hindbrain. At stage 40, expression is restricted to the otic vesicle, differentiated pigment cells, and in several cranial ganglia.

Its subcellular location is the cytoplasm. The protein localises to the nucleus. Acts early in neural crest formation, functioning redundantly with the other group E Sox factors sox8 and sox9 to induce neural crest progenitors. Acts downstream of wnt-signaling at the neural plate border. Involved in the specification of neural crest progenitors fated to form the pigment cell lineage. This chain is Transcription factor Sox-10 (sox10), found in Xenopus laevis (African clawed frog).